Reading from the N-terminus, the 163-residue chain is MKEQQVISAELENLGYSLVEIEREAGGLLRVTIENPDYERLITVLDCEKVSHQLSYTLPVENIPYERLEISSPGLDRPVKSAADFQRFAGMEVDLKLRVAAGNRKNFRGELQGLLSGELNSPDAKFGLVFEGADGQSSQLEFSLAEVDKTRLVPVIDFKGRKS.

It belongs to the RimP family.

The protein resides in the cytoplasm. Required for maturation of 30S ribosomal subunits. The chain is Ribosome maturation factor RimP from Polynucleobacter necessarius subsp. necessarius (strain STIR1).